Here is a 321-residue protein sequence, read N- to C-terminus: tRNA-dihydrouridine synthase B (321 aa).

FMN-binding positions include 16 to 18 (PMA) and Gln70. Cys100 serves as the catalytic Proton donor. FMN is bound by residues Lys139, 200–202 (NGD), and 224–225 (GR).

It belongs to the Dus family. DusB subfamily. FMN serves as cofactor.

It catalyses the reaction a 5,6-dihydrouridine in tRNA + NAD(+) = a uridine in tRNA + NADH + H(+). It carries out the reaction a 5,6-dihydrouridine in tRNA + NADP(+) = a uridine in tRNA + NADPH + H(+). Its function is as follows. Catalyzes the synthesis of 5,6-dihydrouridine (D), a modified base found in the D-loop of most tRNAs, via the reduction of the C5-C6 double bond in target uridines. This is tRNA-dihydrouridine synthase B from Salmonella typhi.